The following is a 239-amino-acid chain: Probable transcriptional regulatory protein Pnuc_0618 (239 aa).

The disordered stretch occupies residues 1-21; sequence MAGHSKWANIQHRKGRQDEKR.

It belongs to the TACO1 family.

It localises to the cytoplasm. The polypeptide is Probable transcriptional regulatory protein Pnuc_0618 (Polynucleobacter asymbioticus (strain DSM 18221 / CIP 109841 / QLW-P1DMWA-1) (Polynucleobacter necessarius subsp. asymbioticus)).